The following is a 392-amino-acid chain: Histidinol-phosphate aminotransferase 2 (392 aa).

K228 bears the N6-(pyridoxal phosphate)lysine mark.

It belongs to the class-II pyridoxal-phosphate-dependent aminotransferase family. Histidinol-phosphate aminotransferase subfamily. As to quaternary structure, homodimer. It depends on pyridoxal 5'-phosphate as a cofactor.

It carries out the reaction L-histidinol phosphate + 2-oxoglutarate = 3-(imidazol-4-yl)-2-oxopropyl phosphate + L-glutamate. It participates in amino-acid biosynthesis; L-histidine biosynthesis; L-histidine from 5-phospho-alpha-D-ribose 1-diphosphate: step 7/9. This Nitrosospira multiformis (strain ATCC 25196 / NCIMB 11849 / C 71) protein is Histidinol-phosphate aminotransferase 2.